The following is a 1076-amino-acid chain: Nuclear factor of activated T-cells, cytoplasmic 3 (1076 aa).

Residue threonine 2 is modified to N-acetylthreonine. Positions 110 to 115 (PSIQIT) are calcineurin-binding. Positions 206–307 (LGSPLTSPGG…PGHSPRGSVT (102 aa)) are disordered. A run of 2 repeats spans residues 208–224 (SPLT…PGEE) and 237–253 (SPRQ…ITDE). A 3 X SP repeats region spans residues 208 to 309 (SPLTSPGGSP…HSPRGSVTED (102 aa)). The span at 237-254 (SPRQSPCHSPRSSITDEN) shows a compositional bias: polar residues. Over residues 257–271 (SPRPASGPSSRPTSP) the composition is skewed to low complexity. A Nuclear localization signal motif is present at residues 274-276 (KRR). Repeat unit 3 spans residues 293–309 (SPVPSPGHSPRGSVTED). Serine 345 carries the phosphoserine modification. A disordered region spans residues 359–390 (CSDDQGSLSPSRETSVDDGLGSQYPLKKDSSG). The segment covering 362–371 (DQGSLSPSRE) has biased composition (polar residues). Phosphoserine is present on serine 373. The region spanning 416–597 (SSLPPLDWPL…IPVECSQRSA (182 aa)) is the RHD domain. The DNA-binding element occupies 445–452 (RAHYETEG). The Nuclear localization signal motif lies at 687-689 (KRK). Disordered stretches follow at residues 700 to 744 (PVLM…ALSA) and 863 to 987 (GHLL…GGLS). A compositionally biased stretch (low complexity) spans 713-722 (LSSVPSLPVP). 2 stretches are compositionally biased toward polar residues: residues 724 to 734 (SAQTQRPSSDT) and 888 to 911 (SAGQ…SHLQ). 2 stretches are compositionally biased toward low complexity: residues 917-939 (PSHP…SSPI) and 946-965 (QLQS…SPSP). Residues 970–981 (HSGQHSTQAQST) are compositionally biased toward polar residues. A Nuclear export signal motif is present at residues 1032–1041 (TLDDVNEIIG). The interval 1049-1076 (VSQGPEVIRDAPLPGPESPDVMSSNSAQ) is disordered. A Phosphoserine modification is found at serine 1066.

As to quaternary structure, NFATC proteins bind to DNA as monomers. Member of the multicomponent NFATC transcription complex that consists of at least two components, a pre-existing cytoplasmic component NFATC2 and an inducible nuclear component NFATC1. Other members such as NFATC4, or members of the activating protein-1 family, MAF, GATA4 and Cbp/p300 can also bind the complex. Component of a promoter-binding complex composed of STAT3, NFATC3 and NFATC4; complex formation is enhanced by calcineurin. Interacts with TRIM17; this interaction prevents NFATC3 nuclear localization. Interacts with and ubiquitinated by STUB1/CHIP; HSPA1A/HSP70 is required as a co-chaperone. Post-translationally, phosphorylated by NFATC-kinase; dephosphorylated by calcineurin. In terms of processing, ubiquitinated by STUB1/CHIP, leading to proteasomal degradation. In terms of tissue distribution, expressed in cardiomyocytes (at protein level).

The protein resides in the cytoplasm. It localises to the nucleus. In terms of biological role, acts as a regulator of transcriptional activation. Binds to the TNFSF11/RANKL promoter region and promotes TNFSF11 transcription. Binding to the TNFSF11 promoter region is increased by high levels of Ca(2+) which induce NFATC3 expression and may lead to regulation of TNFSF11 expression in osteoblasts. Plays a role in promoting mesenteric arterial wall remodeling in response to the intermittent hypoxia-induced increase in EDN1 and ROCK signaling. As a result NFATC3 colocalizes with F-actin filaments, translocates to the nucleus and promotes transcription of the smooth muscle hypertrophy and differentiation marker ACTA2. Promotes lipopolysaccharide-induced apoptosis and hypertrophy in cardiomyocytes. Following JAK/STAT signaling activation and as part of a complex with NFATC4 and STAT3, binds to the alpha-beta E4 promoter region of CRYAB and activates transcription in cardiomyocytes. In conjunction with NFATC4, involved in embryonic heart development via maintenance of cardiomyocyte survival, proliferation and differentiation. Plays a role in the inducible expression of cytokine genes in T-cells, especially in the induction of the IL-2. Required for thymocyte maturation during DN3 to DN4 transition and during positive selection. Positively regulates macrophage-derived polymicrobial clearance, via binding to the promoter region and promoting transcription of NOS2 resulting in subsequent generation of nitric oxide. Involved in Ca(2+)-mediated transcriptional responses upon Ca(2+) influx via ORAI1 CRAC channels. This is Nuclear factor of activated T-cells, cytoplasmic 3 from Rattus norvegicus (Rat).